The sequence spans 92 residues: Small ribosomal subunit protein uS19 (92 aa).

This sequence belongs to the universal ribosomal protein uS19 family.

Protein S19 forms a complex with S13 that binds strongly to the 16S ribosomal RNA. In Klebsiella pneumoniae (strain 342), this protein is Small ribosomal subunit protein uS19.